Here is a 217-residue protein sequence, read N- to C-terminus: 3,4-dihydroxy-2-butanone 4-phosphate synthase (217 aa).

D-ribulose 5-phosphate contacts are provided by residues Arg-37–Glu-38, Asp-42, Arg-150–Thr-154, and Glu-174. Glu-38 serves as a coordination point for Mg(2+). His-153 is a binding site for Mg(2+).

The protein belongs to the DHBP synthase family. Homodimer. It depends on Mg(2+) as a cofactor. Requires Mn(2+) as cofactor.

The catalysed reaction is D-ribulose 5-phosphate = (2S)-2-hydroxy-3-oxobutyl phosphate + formate + H(+). It participates in cofactor biosynthesis; riboflavin biosynthesis; 2-hydroxy-3-oxobutyl phosphate from D-ribulose 5-phosphate: step 1/1. In terms of biological role, catalyzes the conversion of D-ribulose 5-phosphate to formate and 3,4-dihydroxy-2-butanone 4-phosphate. The protein is 3,4-dihydroxy-2-butanone 4-phosphate synthase of Cronobacter sakazakii (strain ATCC BAA-894) (Enterobacter sakazakii).